Consider the following 107-residue polypeptide: EPIDERMAL PATTERNING FACTOR-like protein 3 (107 aa).

Residues 1–24 form the signal peptide; sequence MEYMFLLMSKFFFVFPIIIYIGPA. 3 disulfides stabilise this stretch: C64–C102, C68–C74, and C71–C104.

This sequence belongs to the plant cysteine rich small secretory peptide family. Epidermal patterning factor subfamily.

The protein resides in the secreted. Controls stomatal patterning. The polypeptide is EPIDERMAL PATTERNING FACTOR-like protein 3 (Arabidopsis thaliana (Mouse-ear cress)).